We begin with the raw amino-acid sequence, 489 residues long: FAD-containing monooxygenase EthA (489 aa).

FAD-binding positions include Ser15, Glu36, Thr44–Leu47, Asp56, and Val104. Arg54–Asp56 serves as a coordination point for NADP(+). Residues Ser183 to Thr189 and Arg207 to Ser208 each bind NADP(+).

Belongs to the FAD-binding monooxygenase family. FAD serves as cofactor.

The protein localises to the cell membrane. It catalyses the reaction ethionamide + NADPH + O2 + H(+) = ethionamide S-oxide + NADP(+) + H2O. In terms of biological role, monooxygenase able to convert a wide range of ketones to the corresponding esters or lactones via a Baeyer-Villiger oxidation reaction. Can act on long-chain aliphatic ketones (2-hexanone to 2-dodecanone) and on aromatic ketones (phenylacetone and benzylacetone). Is also able to catalyze enantioselective sulfoxidation of methyl-p-tolylsulfide. In vivo, likely functions as a BVMO, but the exact nature of the physiological substrate(s) remains to be established. Is responsible for the activation of several thiocarbamide-containing pro-drugs, such as ethionamide (ETH), isoxyl (ISO) and thiacetazone (TAC), into reactive species. In Mycobacterium bovis (strain ATCC BAA-935 / AF2122/97), this protein is FAD-containing monooxygenase EthA (ethA).